Consider the following 391-residue polypeptide: Esterase (391 aa).

The N-terminal stretch at 1 to 26 is a signal peptide; the sequence is MEFPETNNNPIITLSFLLCMLSLAYA. The active-site Nucleophile is the Ser41. N-linked (GlcNAc...) asparagine glycosylation is found at Asn186, Asn193, and Asn313. Residues Asp347 and His350 contribute to the active site.

Belongs to the 'GDSL' lipolytic enzyme family. Post-translationally, the N-terminus is blocked. Glycosylated.

Functionally, has lipase and esterase activities. May be involved in plant defense. The polypeptide is Esterase (Hevea brasiliensis (Para rubber tree)).